A 352-amino-acid chain; its full sequence is tRNA-specific 2-thiouridylase MnmA (352 aa).

ATP contacts are provided by residues 6–13 (AMSGGVDS) and leucine 32. Catalysis depends on cysteine 101, which acts as the Nucleophile. A disulfide bond links cysteine 101 and cysteine 194. ATP is bound at residue glycine 125. Residues 144–146 (KDQ) form an interaction with tRNA region. The active-site Cysteine persulfide intermediate is cysteine 194.

Belongs to the MnmA/TRMU family.

It localises to the cytoplasm. It catalyses the reaction S-sulfanyl-L-cysteinyl-[protein] + uridine(34) in tRNA + AH2 + ATP = 2-thiouridine(34) in tRNA + L-cysteinyl-[protein] + A + AMP + diphosphate + H(+). Catalyzes the 2-thiolation of uridine at the wobble position (U34) of tRNA, leading to the formation of s(2)U34. This is tRNA-specific 2-thiouridylase MnmA from Frankia casuarinae (strain DSM 45818 / CECT 9043 / HFP020203 / CcI3).